The sequence spans 462 residues: UDP-N-acetylmuramoylalanine--D-glutamate ligase (462 aa).

Gly-125–Thr-131 is a binding site for ATP.

It belongs to the MurCDEF family.

It is found in the cytoplasm. It catalyses the reaction UDP-N-acetyl-alpha-D-muramoyl-L-alanine + D-glutamate + ATP = UDP-N-acetyl-alpha-D-muramoyl-L-alanyl-D-glutamate + ADP + phosphate + H(+). It functions in the pathway cell wall biogenesis; peptidoglycan biosynthesis. Cell wall formation. Catalyzes the addition of glutamate to the nucleotide precursor UDP-N-acetylmuramoyl-L-alanine (UMA). The protein is UDP-N-acetylmuramoylalanine--D-glutamate ligase of Clostridium acetobutylicum (strain ATCC 824 / DSM 792 / JCM 1419 / IAM 19013 / LMG 5710 / NBRC 13948 / NRRL B-527 / VKM B-1787 / 2291 / W).